A 1323-amino-acid polypeptide reads, in one-letter code: Sister chromatid cohesion protein PDS5 homolog A-A (1323 aa).

Residues 385–421 form an HEAT repeat; that stretch reads FLVNDQLLGFVRERTLDKRWRVRKEAMMGLAQLYKKY. Residues 1139-1323 are disordered; sequence LNATGRRPYS…TAQRQIDLHR (185 aa). The span at 1153–1165 shows a compositional bias: low complexity; it reads SEISNNVSINSES. Polar residues-rich tracts occupy residues 1166–1176 and 1210–1220; these read DASVANRQSSE and LDQTAPSNTGT. Residues 1235–1246 are compositionally biased toward basic and acidic residues; it reads NIRKESEEKKAD.

Interacts with the cohesin complex. Binds chromatin in a cohesin-dependent manner.

It localises to the nucleus. May regulate sister chromatid cohesion during mitosis and couple it to DNA replication. The sequence is that of Sister chromatid cohesion protein PDS5 homolog A-A (pds5a-a) from Xenopus laevis (African clawed frog).